We begin with the raw amino-acid sequence, 425 residues long: CinA-like protein (425 aa).

Belongs to the CinA family.

This chain is CinA-like protein, found in Mycobacterium marinum (strain ATCC BAA-535 / M).